Consider the following 192-residue polypeptide: Ion-translocating oxidoreductase complex subunit A (192 aa).

A run of 6 helical transmembrane segments spans residues 5–25 (LLLL…FLGL), 39–59 (IGMS…SYLV), 65–85 (LPFD…AVVV), 102–122 (ALGI…VALL), 134–154 (AIFG…FSAM), and 171–191 (AIAM…TGLV).

It belongs to the NqrDE/RnfAE family. In terms of assembly, the complex is composed of six subunits: RnfA, RnfB, RnfC, RnfD, RnfE and RnfG.

It is found in the cell inner membrane. Functionally, part of a membrane-bound complex that couples electron transfer with translocation of ions across the membrane. The polypeptide is Ion-translocating oxidoreductase complex subunit A (Shewanella pealeana (strain ATCC 700345 / ANG-SQ1)).